Reading from the N-terminus, the 203-residue chain is Secreted phosphoprotein 24 (203 aa).

A signal peptide spans 1-23 (MEQAMLKTLALLVLGMHYWCATG). 2 disulfide bridges follow: C86–C96 and C109–C127. Phosphoserine is present on S90. Phosphoserine is present on residues S137, S138, S162, S165, and S174.

The protein belongs to the SPP2 family. Post-translationally, phosphorylation sites are present in the extracellular medium.

It localises to the secreted. Could coordinate an aspect of bone turnover. The sequence is that of Secreted phosphoprotein 24 (Spp2) from Mus musculus (Mouse).